Consider the following 1124-residue polypeptide: Regulator of nonsense transcripts 1 (1124 aa).

The sufficient for interaction with RENT2 stretch occupies residues 1 to 410 (MSVEAYGPSS…LRSSVGAPVE (410 aa)). S10 and S31 each carry phosphoserine. The interval 39–69 (TLPSQTQTPPGGPGGAGGPGGAGAGGAAGQL) is disordered. Positions 51–66 (PGGAGGPGGAGAGGAA) are enriched in gly residues. The region spanning 110–267 (TKDLPVHACS…NKLEELWKEN (158 aa)) is the Upf1 CH-rich domain. 12 residues coordinate Zn(2+): C118, C121, C132, S135, C140, H150, H154, C160, C178, C181, C204, and C208. A C3H region spans residues 118–150 (CSYCGIHDPACVVYCNTSKKWFCNGRGNTSGSH). The segment at 132–160 (CNTSKKWFCNGRGNTSGSHIVNHLVRAKC) is CC/SHH/C. A C4 region spans residues 178–208 (CYNCGCRNVFLLGFIPAKADSVVVLLCRQPC). ATP contacts are provided by residues Q481 and 501–505 (GTGKT). A Phosphoserine modification is found at S560. ATP is bound by residues Q671, Y708, and E839. S951 bears the Phosphoserine mark. Disordered regions lie at residues 1004 to 1053 (FGQA…VASQ) and 1066 to 1091 (SMSQPSQMSQPGLSQPELSQDSYLGD). Omega-N-methylarginine is present on R1014. The span at 1020-1029 (KTGRGGRQKN) shows a compositional bias: basic residues. The span at 1036–1053 (PSQTTLPNSQASQDVASQ) shows a compositional bias: polar residues. The segment covering 1066–1081 (SMSQPSQMSQPGLSQP) has biased composition (low complexity). Phosphoserine occurs at positions 1084, 1102, 1105, and 1122. 2 consecutive short sequence motifs ([ST]-Q motif) follow at residues 1084 to 1085 (SQ) and 1102 to 1103 (SQ). A disordered region spans residues 1105 to 1124 (STYQGERAYQHGGVTGLSQY).

This sequence belongs to the DNA2/NAM7 helicase family. Found in a post-splicing messenger ribonucleoprotein (mRNP) complex. Associates with the exon junction complex (EJC). Associates with the SGM1C complex; is phosphorylated by the complex kinase component SGM1. Part of a complex composed of SMG1, DHX34 and UPF1; within the complex DHX34 acts as a scaffolding protein to facilitate SMG1 phosphorylation of UPF1. Interacts with UPF2. Interacts with UPF3A and UPF3B. Interacts with EST1A. Interacts with SLBP. Interacts (when hyperphosphorylated) with PNRC2. Interacts with AGO1 and AGO2. Interacts with GSPT2. Interacts with isoform 1 and isoform 5 of ADAR/ADAR1. Interacts with SMG7. Interacts with ZC3H12A; this interaction occurs in a mRNA translationally active- and termination-dependent manner and is essential for ZC3H12A-mediated degradation of target mRNAs. Interacts with CPSF6. Interacts with MOV10; the interaction is direct and RNA-dependent. Interacts with SHFL; the interaction increases in the presence of RNA. Interacts with UPF2 and DDX4; interactions are mediated by TDRD6. Interacts with DHX34 and PABPC1/PABP1; the interactions are RNA-independent. Interacts with RBM46. Phosphorylated by SMG1; required for formation of mRNA surveillance complexes. As to expression, localizes in male germ cells.

Its subcellular location is the cytoplasm. It is found in the P-body. It localises to the nucleus. The protein resides in the perinuclear region. The catalysed reaction is ATP + H2O = ADP + phosphate + H(+). RNA-dependent helicase required for nonsense-mediated decay (NMD) of aberrant mRNAs containing premature stop codons and modulates the expression level of normal mRNAs. Is recruited to mRNAs upon translation termination and undergoes a cycle of phosphorylation and dephosphorylation; its phosphorylation appears to be a key step in NMD. Recruited by release factors to stalled ribosomes together with the SMG1C protein kinase complex to form the transient SURF (SMG1-UPF1-eRF1-eRF3) complex. In EJC-dependent NMD, the SURF complex associates with the exon junction complex (EJC) (located 50-55 or more nucleotides downstream from the termination codon) through UPF2 and allows the formation of an UPF1-UPF2-UPF3 surveillance complex which is believed to activate NMD. Phosphorylated UPF1 is recognized by EST1B/SMG5, SMG6 and SMG7 which are thought to provide a link to the mRNA degradation machinery involving exonucleolytic and endonucleolytic pathways, and to serve as adapters to protein phosphatase 2A (PP2A), thereby triggering UPF1 dephosphorylation and allowing the recycling of NMD factors. UPF1 can also activate NMD without UPF2 or UPF3, and in the absence of the NMD-enhancing downstream EJC indicative for alternative NMD pathways. Plays a role in replication-dependent histone mRNA degradation at the end of phase S; the function is independent of UPF2. For the recognition of premature termination codons (PTC) and initiation of NMD a competitive interaction between UPF1 and PABPC1 with the ribosome-bound release factors is proposed. The ATPase activity of UPF1 is required for disassembly of mRNPs undergoing NMD. Together with UPF2 and dependent on TDRD6, mediates the degradation of mRNA harboring long 3'UTR by inducing the NMD machinery. Also capable of unwinding double-stranded DNA and translocating on single-stranded DNA. This Mus musculus (Mouse) protein is Regulator of nonsense transcripts 1.